A 159-amino-acid polypeptide reads, in one-letter code: Ribosomal RNA large subunit methyltransferase H (159 aa).

Residues leucine 76, glycine 108, and 127-132 contribute to the S-adenosyl-L-methionine site; that span reads FGQLTL.

This sequence belongs to the RNA methyltransferase RlmH family. As to quaternary structure, homodimer.

It is found in the cytoplasm. It carries out the reaction pseudouridine(1915) in 23S rRNA + S-adenosyl-L-methionine = N(3)-methylpseudouridine(1915) in 23S rRNA + S-adenosyl-L-homocysteine + H(+). Functionally, specifically methylates the pseudouridine at position 1915 (m3Psi1915) in 23S rRNA. This Streptococcus suis (strain 05ZYH33) protein is Ribosomal RNA large subunit methyltransferase H.